A 481-amino-acid polypeptide reads, in one-letter code: MSRLPSKTKYHSSHRSLNRKTPLLQRSSETNSLRESGIETASSQLSLAASSYTPIDEEMTELELKIYLFLFTRALNHKLGYTQENNPDDKAQKAGIDINLDCLNYLLEILYQNLEPQLEKGANLSYHKSSTARKALEYHETLNSRLKKKIAKDAEHKNPLTLLRILNTKTTSISTLIGTGGGIGITGAGAIAGSAAAGIGTAVTVGVLLFYLCWRTTSEYWKKKNAEKLFEHTDQIDNENIIELVSALSAFYIVKEFEHKNMQKASLKLSLNPESLFEIFQNIYHNKSFRLPSQLPIQKELKAIAKQAKIDADKIHTHLIEYVNTNKAQSISINLYALIIPSFAYNSEESPTVVKTVAALHAWLWALDKTLDMKDFLFRNSFEKRLEKVRAGVVKTMKTFKEEVNNVLLETDDSSSGVSLLADEDKTDRVKEWVNKQKLPSPGALSPIKSASHLALFSSLREQKDKAVNSSGSRLSLRLGN.

A compositionally biased stretch (basic residues) spans 1 to 18 (MSRLPSKTKYHSSHRSLN). Positions 1 to 37 (MSRLPSKTKYHSSHRSLNRKTPLLQRSSETNSLRESG) are disordered. Positions 24 to 34 (LQRSSETNSLR) are enriched in polar residues. 2 consecutive transmembrane segments (helical) span residues 172-191 (SISTLIGTGGGIGITGAGAI) and 195-214 (AAAGIGTAVTVGVLLFYLCW).

The protein resides in the membrane. This is an uncharacterized protein from Coxiella burnetii (strain RSA 493 / Nine Mile phase I).